Consider the following 240-residue polypeptide: 1-(5-phosphoribosyl)-5-[(5-phosphoribosylamino)methylideneamino] imidazole-4-carboxamide isomerase 2 (240 aa).

The active-site Proton acceptor is the Asp8. The active-site Proton donor is the Asp129.

Belongs to the HisA/HisF family.

Its subcellular location is the cytoplasm. It catalyses the reaction 1-(5-phospho-beta-D-ribosyl)-5-[(5-phospho-beta-D-ribosylamino)methylideneamino]imidazole-4-carboxamide = 5-[(5-phospho-1-deoxy-D-ribulos-1-ylimino)methylamino]-1-(5-phospho-beta-D-ribosyl)imidazole-4-carboxamide. It functions in the pathway amino-acid biosynthesis; L-histidine biosynthesis; L-histidine from 5-phospho-alpha-D-ribose 1-diphosphate: step 4/9. The polypeptide is 1-(5-phosphoribosyl)-5-[(5-phosphoribosylamino)methylideneamino] imidazole-4-carboxamide isomerase 2 (Ruegeria sp. (strain TM1040) (Silicibacter sp.)).